The following is a 310-amino-acid chain: MSIAEDITQLIGRTPLVRLRRVTDGAVADIVAKLEFFNPANSVKDRIGVAMLQAAEQAGLIKPDTIILEPTSGNTGIALAMVCAARGYRCVLTMPETMSLERRMLLRAYGAELILTPGADGMSGAIAKAEELAKTDQRYFVPQQFENPANPAIHRVTTAEEVWRDTDGKVDIVVAGVGTGGTITGVAQVIKERKPSARFVAVEPAASPVLSGGQKGPHPIQGIGAGFVPPVLDQDLVDEIITVGNEDALNVARRLAREEGLLVGISSGAATVAALQVARRPENAGKLIVVVLPDFGERYLSTPLFADVAD.

N6-(pyridoxal phosphate)lysine is present on K44. Residues N74, 178–182 (GTGGT), and S266 contribute to the pyridoxal 5'-phosphate site.

The protein belongs to the cysteine synthase/cystathionine beta-synthase family. Homodimer. Pyridoxal 5'-phosphate serves as cofactor.

It catalyses the reaction O-acetyl-L-serine + hydrogen sulfide = L-cysteine + acetate. Its pathway is amino-acid biosynthesis; L-cysteine biosynthesis; L-cysteine from L-serine: step 2/2. Catalyzes the conversion of O-acetylserine (OAS) to cysteine through the elimination of acetate and addition of hydrogen sulfide. This is O-acetylserine sulfhydrylase (cysK) from Mycobacterium bovis (strain ATCC BAA-935 / AF2122/97).